The following is a 500-amino-acid chain: Na(+)/H(+) antiporter NhaB (500 aa).

11 consecutive transmembrane segments (helical) span residues 13 to 33, 34 to 54, 62 to 82, 97 to 117, 129 to 149, 242 to 262, 306 to 326, 350 to 370, 392 to 412, 449 to 469, and 477 to 497; these read FLGA…IINP, IAVV…EFIF, CYPL…GLTS, ILLL…LLFI, IVIS…LDAL, FLYV…TVVI, GIVA…VGLV, FEEA…VSVI, PIMF…VFVA, VATP…IAPL, and MVWM…LCVT.

This sequence belongs to the NhaB Na(+)/H(+) (TC 2.A.34) antiporter family.

The protein localises to the cell inner membrane. It carries out the reaction 2 Na(+)(in) + 3 H(+)(out) = 2 Na(+)(out) + 3 H(+)(in). Functionally, na(+)/H(+) antiporter that extrudes sodium in exchange for external protons. The protein is Na(+)/H(+) antiporter NhaB of Marinomonas sp. (strain MWYL1).